Here is a 312-residue protein sequence, read N- to C-terminus: DNA-directed RNA polymerase subunit alpha (312 aa).

The alpha N-terminal domain (alpha-NTD) stretch occupies residues 1–226; sequence MIEFEKPNIT…EHFKVFMSTD (226 aa). The segment at 243–312 is alpha C-terminal domain (alpha-CTD); it reads NEKKLEMTIE…DLGLSLRQDD (70 aa).

The protein belongs to the RNA polymerase alpha chain family. In terms of assembly, homodimer. The RNAP catalytic core consists of 2 alpha, 1 beta, 1 beta' and 1 omega subunit. When a sigma factor is associated with the core the holoenzyme is formed, which can initiate transcription.

It catalyses the reaction RNA(n) + a ribonucleoside 5'-triphosphate = RNA(n+1) + diphosphate. DNA-dependent RNA polymerase catalyzes the transcription of DNA into RNA using the four ribonucleoside triphosphates as substrates. This Lactobacillus johnsonii (strain CNCM I-12250 / La1 / NCC 533) protein is DNA-directed RNA polymerase subunit alpha.